The sequence spans 143 residues: UPF0201 protein Tneu_0685 (143 aa).

It belongs to the UPF0201 family.

In Pyrobaculum neutrophilum (strain DSM 2338 / JCM 9278 / NBRC 100436 / V24Sta) (Thermoproteus neutrophilus), this protein is UPF0201 protein Tneu_0685.